We begin with the raw amino-acid sequence, 335 residues long: DNA-directed RNA polymerase RPB7 homolog (335 aa).

It belongs to the Asfivirus DNA-directed RNA polymerase RPB7 homolog family. As to quaternary structure, part of the viral DNA-directed RNA polymerase that consists of 8 polII-like subunits (RPB1, RPB2, RPB3, RPB5, RPB6, RPB7, RPB9, RPB10), a capping enzyme and a termination factor.

Its subcellular location is the host cytoplasm. The protein resides in the virion. Functionally, component of the DNA-directed RNA polymerase (RNAP) that catalyzes the transcription in the cytoplasm of viral DNA into RNA using the four ribonucleoside triphosphates as substrates. This Ornithodoros (relapsing fever ticks) protein is DNA-directed RNA polymerase RPB7 homolog.